Reading from the N-terminus, the 268-residue chain is Small ribosomal subunit protein eS1 (268 aa).

Residues 1–21 (MAVGKNKGLSKGGKKGGKKKV) form a disordered region.

The protein belongs to the eukaryotic ribosomal protein eS1 family. As to quaternary structure, component of the small ribosomal subunit. Mature ribosomes consist of a small (40S) and a large (60S) subunit. The 40S subunit contains about 33 different proteins and 1 molecule of RNA (18S). The 60S subunit contains about 49 different proteins and 3 molecules of RNA (28S, 5.8S and 5S).

The protein resides in the cytoplasm. Essential for oogenesis; required for late follicle cell development. This Drosophila persimilis (Fruit fly) protein is Small ribosomal subunit protein eS1.